We begin with the raw amino-acid sequence, 117 residues long: Large ribosomal subunit protein bL20 (117 aa).

It belongs to the bacterial ribosomal protein bL20 family.

Binds directly to 23S ribosomal RNA and is necessary for the in vitro assembly process of the 50S ribosomal subunit. It is not involved in the protein synthesizing functions of that subunit. This is Large ribosomal subunit protein bL20 from Wigglesworthia glossinidia brevipalpis.